Consider the following 513-residue polypeptide: ATP synthase subunit alpha 2 (513 aa).

Residue 169–176 (GDRQTGKT) participates in ATP binding.

Belongs to the ATPase alpha/beta chains family. In terms of assembly, F-type ATPases have 2 components, CF(1) - the catalytic core - and CF(0) - the membrane proton channel. CF(1) has five subunits: alpha(3), beta(3), gamma(1), delta(1), epsilon(1). CF(0) has three main subunits: a(1), b(2) and c(9-12). The alpha and beta chains form an alternating ring which encloses part of the gamma chain. CF(1) is attached to CF(0) by a central stalk formed by the gamma and epsilon chains, while a peripheral stalk is formed by the delta and b chains.

It is found in the cell inner membrane. It catalyses the reaction ATP + H2O + 4 H(+)(in) = ADP + phosphate + 5 H(+)(out). Produces ATP from ADP in the presence of a proton gradient across the membrane. The alpha chain is a regulatory subunit. This Shewanella frigidimarina (strain NCIMB 400) protein is ATP synthase subunit alpha 2.